We begin with the raw amino-acid sequence, 355 residues long: Elongation factor Ts (355 aa).

The interval 82-85 is involved in Mg(2+) ion dislocation from EF-Tu; that stretch reads TDFV.

This sequence belongs to the EF-Ts family.

It localises to the cytoplasm. Functionally, associates with the EF-Tu.GDP complex and induces the exchange of GDP to GTP. It remains bound to the aminoacyl-tRNA.EF-Tu.GTP complex up to the GTP hydrolysis stage on the ribosome. This Helicobacter hepaticus (strain ATCC 51449 / 3B1) protein is Elongation factor Ts.